The chain runs to 402 residues: Imidazolonepropionase (402 aa).

Residues His66 and His68 each contribute to the Fe(3+) site. Zn(2+) contacts are provided by His66 and His68. 3 residues coordinate 4-imidazolone-5-propanoate: Arg75, Tyr138, and His171. N-formimidoyl-L-glutamate is bound at residue Tyr138. Residue His236 participates in Fe(3+) binding. Zn(2+) is bound at residue His236. 4-imidazolone-5-propanoate is bound at residue Gln239. Position 311 (Asp311) interacts with Fe(3+). A Zn(2+)-binding site is contributed by Asp311. Residues Asn313 and Gly315 each contribute to the N-formimidoyl-L-glutamate site. Thr316 lines the 4-imidazolone-5-propanoate pocket.

The protein belongs to the metallo-dependent hydrolases superfamily. HutI family. It depends on Zn(2+) as a cofactor. Fe(3+) is required as a cofactor.

It localises to the cytoplasm. It carries out the reaction 4-imidazolone-5-propanoate + H2O = N-formimidoyl-L-glutamate. The protein operates within amino-acid degradation; L-histidine degradation into L-glutamate; N-formimidoyl-L-glutamate from L-histidine: step 3/3. Its function is as follows. Catalyzes the hydrolytic cleavage of the carbon-nitrogen bond in imidazolone-5-propanoate to yield N-formimidoyl-L-glutamate. It is the third step in the universal histidine degradation pathway. This Pseudomonas aeruginosa (strain ATCC 15692 / DSM 22644 / CIP 104116 / JCM 14847 / LMG 12228 / 1C / PRS 101 / PAO1) protein is Imidazolonepropionase.